Consider the following 75-residue polypeptide: MASLKKSLFLVLLLGFVSVSICEEEKRQEDEDEHEEEGESQEEGSEEKRGLLSVLGSVAKHVLPHVVPVIAEHLG.

Residues 1–22 form the signal peptide; the sequence is MASLKKSLFLVLLLGFVSVSIC. Residues 23–49 constitute a propeptide that is removed on maturation; that stretch reads EEEKRQEDEDEHEEEGESQEEGSEEKR. Residues 24–49 are disordered; that stretch reads EEKRQEDEDEHEEEGESQEEGSEEKR. Acidic residues predominate over residues 30–45; sequence DEDEHEEEGESQEEGS. Leu-74 carries the leucine amide modification.

This sequence belongs to the frog skin active peptide (FSAP) family. Caerin subfamily. The major product is Caerin-1.1; in addition, different peptides are produced that are missing some amino acid residues at the N-terminus or C-terminus. Caerin-1.1.1 and Caerin-1.1.4 are inactive. In terms of tissue distribution, expressed by the skin parotoid and/or rostral glands.

The protein resides in the secreted. In terms of biological role, antimicrobial peptide with antibacterial and antiviral activities. Adopts an alpha helical conformation which can disrupt bacterial membranes. Inhibits the formation of NO by neuronal nitric oxide synthase (nNOS) at micromolar concentrations. Acts by a non-competitive mechanism, probably by binding to calcium/calmodulin and as a consequence blocking calmodulin attachment to nNOS. Functionally, is inactive. This Ranoidea caerulea (Green tree frog) protein is Caerin-1.1.